The sequence spans 114 residues: Beta-microseminoprotein (114 aa).

The first 20 residues, 1–20, serve as a signal peptide directing secretion; sequence MNVLLGGFVIFATFVTLCNA. 5 disulfides stabilise this stretch: Cys22–Cys70, Cys38–Cys62, Cys57–Cys93, Cys60–Cys69, and Cys84–Cys107.

It belongs to the beta-microseminoprotein family. As to quaternary structure, homodimer; Interacts with PI16.

It localises to the secreted. This is Beta-microseminoprotein (MSMB) from Papio anubis (Olive baboon).